We begin with the raw amino-acid sequence, 410 residues long: Acetate kinase (410 aa).

Asparagine 7 lines the Mg(2+) pocket. Lysine 14 is a binding site for ATP. Arginine 88 is a binding site for substrate. The active-site Proton donor/acceptor is the aspartate 145. Residues histidine 203–glycine 207, aspartate 278–arginine 280, and glycine 326–asparagine 330 contribute to the ATP site. Glutamate 379 serves as a coordination point for Mg(2+).

Belongs to the acetokinase family. Homodimer. Requires Mg(2+) as cofactor. Mn(2+) is required as a cofactor.

Its subcellular location is the cytoplasm. It catalyses the reaction acetate + ATP = acetyl phosphate + ADP. It functions in the pathway metabolic intermediate biosynthesis; acetyl-CoA biosynthesis; acetyl-CoA from acetate: step 1/2. In terms of biological role, catalyzes the formation of acetyl phosphate from acetate and ATP. Can also catalyze the reverse reaction. This Onion yellows phytoplasma (strain OY-M) protein is Acetate kinase.